The sequence spans 63 residues: UPF0337 protein SERP0494 (63 aa).

The interval 1 to 46 is disordered; that stretch reads MAEDKFEQAKGNIKETVGNATDNKELEKDGKGDKASGKAKEAVENV. Residues 22-46 are compositionally biased toward basic and acidic residues; that stretch reads DNKELEKDGKGDKASGKAKEAVENV.

The protein belongs to the UPF0337 (CsbD) family.

This is UPF0337 protein SERP0494 from Staphylococcus epidermidis (strain ATCC 35984 / DSM 28319 / BCRC 17069 / CCUG 31568 / BM 3577 / RP62A).